A 362-amino-acid polypeptide reads, in one-letter code: Heme A synthase (362 aa).

5 helical membrane-spanning segments follow: residues leucine 10–valine 30, valine 102–glycine 122, leucine 128–serine 148, valine 159–leucine 179, and alanine 198–leucine 218. Position 262 (histidine 262) interacts with heme. Helical transmembrane passes span alanine 266–glycine 286, leucine 297–isoleucine 317, and serine 318–alanine 338. Residue histidine 323 participates in heme binding.

Belongs to the COX15/CtaA family. Type 2 subfamily. As to quaternary structure, interacts with CtaB. Heme b is required as a cofactor.

The protein localises to the cell membrane. The catalysed reaction is Fe(II)-heme o + 2 A + H2O = Fe(II)-heme a + 2 AH2. Its pathway is porphyrin-containing compound metabolism; heme A biosynthesis; heme A from heme O: step 1/1. Its function is as follows. Catalyzes the conversion of heme O to heme A by two successive hydroxylations of the methyl group at C8. The first hydroxylation forms heme I, the second hydroxylation results in an unstable dihydroxymethyl group, which spontaneously dehydrates, resulting in the formyl group of heme A. The sequence is that of Heme A synthase from Bradyrhizobium sp. (strain BTAi1 / ATCC BAA-1182).